A 343-amino-acid polypeptide reads, in one-letter code: Low conductance mechanosensitive channel YnaI (343 aa).

The Periplasmic segment spans residues 1 to 9; that stretch reads MIAELFTNN. A helical membrane pass occupies residues 10-30; that stretch reads ALNLVIIFGSCAALILMSFWF. Topologically, residues 31–40 are cytoplasmic; the sequence is RRGNRKRKGF. Residues 41-61 traverse the membrane as a helical segment; sequence LFHAVQFLIYTIIISAVGSII. Residues 62–77 lie on the Periplasmic side of the membrane; that stretch reads NYVIENYKLKFITPGV. Residues 78–98 form a helical membrane-spanning segment; sequence IDFICTSLIAVILTIKLFLLI. The Cytoplasmic portion of the chain corresponds to 99-125; it reads NQFEKQQIKKGRDITSARIMSRIIKIT. Residues 126–146 form a helical membrane-spanning segment; the sequence is IIVVLVLLYGEHFGMSLSGLL. Residue threonine 147 is a topological domain, periplasmic. Residues 148–168 form a helical membrane-spanning segment; that stretch reads FGGIGGLAVGMAGKDILSNFF. Residues 169–343 are Cytoplasmic-facing; sequence SGIMLYFDRP…DNITPPEQGR (175 aa).

The protein belongs to the MscS (TC 1.A.23) family. Homoheptamer.

Its subcellular location is the cell inner membrane. Functionally, mechanosensitive channel that protects cells against hypoosmotic stress when highly overexpressed. The polypeptide is Low conductance mechanosensitive channel YnaI (ynaI) (Escherichia coli (strain K12)).